A 182-amino-acid polypeptide reads, in one-letter code: Inosine/xanthosine triphosphatase (182 aa).

Mg(2+)-binding residues include Asp-38 and Glu-68. Position 68–69 (68–69) interacts with substrate; it reads EA.

The protein belongs to the YjjX NTPase family. In terms of assembly, homodimer. It depends on Mg(2+) as a cofactor. Requires Mn(2+) as cofactor.

It catalyses the reaction XTP + H2O = XDP + phosphate + H(+). The catalysed reaction is ITP + H2O = IDP + phosphate + H(+). In terms of biological role, phosphatase that hydrolyzes non-canonical purine nucleotides such as XTP and ITP to their respective diphosphate derivatives. Probably excludes non-canonical purines from DNA/RNA precursor pool, thus preventing their incorporation into DNA/RNA and avoiding chromosomal lesions. The sequence is that of Inosine/xanthosine triphosphatase from Erwinia tasmaniensis (strain DSM 17950 / CFBP 7177 / CIP 109463 / NCPPB 4357 / Et1/99).